The sequence spans 362 residues: MTAAEKLTVAVVYGGQSTEHSVSCISAGAIIDNLDPERFTVVPVGITNGGAWVPGATDTAQLRASGRELPTVADHGEHIQPMLGAAGEATEFRFVTGDRAGDVFATADVIFPVLHGANGEDGTIQGLFDLLGARYVGNGVLASAAGMDKEFTKKIAREAGIPTGPEVVLHGRTELTDHERELLGLPVFVKPARGGSSIGISKVDSWRDLPAAIEEAASHDPKVIIEAMITGPEVECGVLEREDGTLVASSPAMLEGTDAGEEGFYGFDAKYLDDTVSATIPAPLDEETTRRVQQLAIETYRALGCTGLARVDFFVTDAGPVLNEINTMPGFTPISMYPQMFLADGVSYADLLTTLVSGARRH.

The 205-residue stretch at 153–357 folds into the ATP-grasp domain; sequence KKIAREAGIP…YADLLTTLVS (205 aa). ATP is bound at residue 180–235; that stretch reads RELLGLPVFVKPARGGSSIGISKVDSWRDLPAAIEEAASHDPKVIIEAMITGPEVE. Positions 312, 324, and 326 each coordinate Mg(2+).

The protein belongs to the D-alanine--D-alanine ligase family. Requires Mg(2+) as cofactor. Mn(2+) is required as a cofactor.

The protein resides in the cytoplasm. The catalysed reaction is 2 D-alanine + ATP = D-alanyl-D-alanine + ADP + phosphate + H(+). The protein operates within cell wall biogenesis; peptidoglycan biosynthesis. Cell wall formation. This Corynebacterium urealyticum (strain ATCC 43042 / DSM 7109) protein is D-alanine--D-alanine ligase.